The primary structure comprises 99 residues: NADH-quinone oxidoreductase subunit K (99 aa).

3 helical membrane passes run 3–23 (PTYY…GVLV), 28–48 (IVVF…LVTF), and 59–79 (VMAF…LAII).

This sequence belongs to the complex I subunit 4L family. As to quaternary structure, NDH-1 is composed of 14 different subunits. Subunits NuoA, H, J, K, L, M, N constitute the membrane sector of the complex.

It is found in the cell membrane. The enzyme catalyses a quinone + NADH + 5 H(+)(in) = a quinol + NAD(+) + 4 H(+)(out). Functionally, NDH-1 shuttles electrons from NADH, via FMN and iron-sulfur (Fe-S) centers, to quinones in the respiratory chain. The immediate electron acceptor for the enzyme in this species is believed to be a menaquinone. Couples the redox reaction to proton translocation (for every two electrons transferred, four hydrogen ions are translocated across the cytoplasmic membrane), and thus conserves the redox energy in a proton gradient. The protein is NADH-quinone oxidoreductase subunit K of Saccharopolyspora erythraea (strain ATCC 11635 / DSM 40517 / JCM 4748 / NBRC 13426 / NCIMB 8594 / NRRL 2338).